The sequence spans 226 residues: Transmembrane emp24 domain-containing protein 5 (226 aa).

An N-terminal signal peptide occupies residues 1–24 (MGDKTWLPFPVVLLAALLLPRAAG). Over 25–193 (FTPSLDSDFT…IQESNFDRVN (169 aa)) the chain is Lumenal. One can recognise a GOLD domain in the interval 42 to 123 (KECFYQPMPL…EKVIFFELIL (82 aa)). A helical membrane pass occupies residues 194 to 214 (FWSMVNLVVMVVVSAIQVYML). Over 215-226 (KSLFEDKRKSRT) the chain is Cytoplasmic. The Mediates export from ER motif lies at 217-218 (LF).

It belongs to the EMP24/GP25L family. In terms of assembly, interacts with TMED9 and TMED10.

The protein resides in the endoplasmic reticulum membrane. It is found in the golgi apparatus. It localises to the cis-Golgi network membrane. Its subcellular location is the endoplasmic reticulum-Golgi intermediate compartment membrane. Potential role in vesicular protein trafficking, mainly in the early secretory pathway. Required for the maintenance of the Golgi apparatus; involved in protein exchange between Golgi stacks during assembly. Probably not required for COPI-vesicle-mediated retrograde transport. This is Transmembrane emp24 domain-containing protein 5 (TMED5) from Bos taurus (Bovine).